A 93-amino-acid chain; its full sequence is Putative pterin-4-alpha-carbinolamine dehydratase (93 aa).

The protein belongs to the pterin-4-alpha-carbinolamine dehydratase family.

The enzyme catalyses (4aS,6R)-4a-hydroxy-L-erythro-5,6,7,8-tetrahydrobiopterin = (6R)-L-erythro-6,7-dihydrobiopterin + H2O. In Trichormus variabilis (strain ATCC 29413 / PCC 7937) (Anabaena variabilis), this protein is Putative pterin-4-alpha-carbinolamine dehydratase.